The chain runs to 153 residues: Glucose-6-phosphate 1-dehydrogenase (153 aa).

2 residues coordinate NADP(+): Arg21 and Lys120. Lys120 contributes to the D-glucose 6-phosphate binding site.

Belongs to the glucose-6-phosphate dehydrogenase family.

It localises to the cytoplasm. The protein localises to the cytosol. The enzyme catalyses D-glucose 6-phosphate + NADP(+) = 6-phospho-D-glucono-1,5-lactone + NADPH + H(+). It participates in carbohydrate degradation; pentose phosphate pathway; D-ribulose 5-phosphate from D-glucose 6-phosphate (oxidative stage): step 1/3. Its function is as follows. Cytosolic glucose-6-phosphate dehydrogenase that catalyzes the first and rate-limiting step of the oxidative branch within the pentose phosphate pathway/shunt, an alternative route to glycolysis for the dissimilation of carbohydrates and a major source of reducing power and metabolic intermediates for fatty acid and nucleic acid biosynthetic processes. The chain is Glucose-6-phosphate 1-dehydrogenase (ZW) from Culex pipiens (House mosquito).